The following is a 77-amino-acid chain: Conotoxin Ar5.1 b (77 aa).

The signal sequence occupies residues 1 to 19 (MLCLPVFIILLLLASPAAS). Positions 20 to 44 (NPLKTRIQSDLIRAALEDADMKNEK) are excised as a propeptide.

This sequence belongs to the conotoxin T superfamily. Contains 2 disulfide bonds that can be either 'C1-C3, C2-C4' or 'C1-C4, C2-C3', since these disulfide connectivities have been observed for conotoxins with cysteine framework V (for examples, see AC P0DQQ7 and AC P81755). Expressed by the venom duct.

Its subcellular location is the secreted. The sequence is that of Conotoxin Ar5.1 b from Conus arenatus (Sand-dusted cone).